Consider the following 696-residue polypeptide: MKDDQLIDWIHERYEEQKSANRLAGRFRFLGLETKYSIISIISGIFIGLTAALLNALASLLNSFREGYCTVNILFDKQTCCSTLTEDYECQEFFFWRNNHSVFVSCLIYVSVSVGFAFIATTLGYVVAPAARASGIPTIKAILSGYKYPDMNVFFSIKTLCSKSLAVCFSVASGLWVGKEGPFVHIATNIIYLVERIAPSLADSEIFTRQLLAAAMASGIAASFNAPVGGVIFALEQLASSSFPSLFTGSIWYEFLCSASSVVALQLIRSWHTDVGYLSYVSLDRRWSYKDTLPFIFISILCGCLGSVLIYLNMKFASKTKGFSKISNVFFVIFLSLITSLTAYAILGESELLFNPMELFPQVINSCSPSSSTVLCETTFWVTAIVLFTSALLGLLLTSATFGAAIPTGIIVPSLAIGACIGRAVGTLLKSRFPSLAGTSIYGVIGSIAFLSSTTRLVVALVVILFELTGALNIALPLMLATLISKWVSDSIIETSIYDAWIQFRNIPYFPSSNSLKFSIPLNFPVRSPEQLVRLPIRSCSIEELERAMHDSSQSFFVVLKNDTEFFEGFISRNKVSELLNRRPMSSNMQTTDNTGLDPLRSASAPVDSTFDLFDYIHPTTFTLNYDTPPVLMLKLFKDAGITNLALLNHGKLHGVLTKIDIIEYAKKCKTHTGNTYSELPTGVTYETDIFNRADD.

Transmembrane regions (helical) follow at residues 38–58 (IISIISGIFIGLTAALLNALA), 107–127 (LIYVSVSVGFAFIATTLGYVV), 215–235 (AMASGIAASFNAPVGGVIFAL), 245–265 (SLFTGSIWYEFLCSASSVVAL), 292–312 (TLPFIFISILCGCLGSVLIYL), 329–349 (VFFVIFLSLITSLTAYAILGE), 380–400 (FWVTAIVLFTSALLGLLLTSA), 402–422 (FGAAIPTGIIVPSLAIGACIG), 433–453 (FPSLAGTSIYGVIGSIAFLSS), and 457–477 (LVVALVVILFELTGALNIALP). CBS domains lie at 527–587 (RSPE…PMSS) and 617–674 (IHPT…THTG).

Belongs to the chloride channel (TC 2.A.49) family.

The protein localises to the membrane. Functionally, voltage-gated chloride channel. This is an uncharacterized protein from Schizosaccharomyces pombe (strain 972 / ATCC 24843) (Fission yeast).